A 194-amino-acid polypeptide reads, in one-letter code: MHILTAGVDEAGRGPLVGSVFAAAVILPETFDLPGLTDSKKLSEKKRDALAEMIKEQAVAWHVAASTPEEIASLNILHATMLAMKRAVYGLAARPEKIFIDGNRIPEHLGIPAEAVVKGDSKIIEISAASVLAKTARDAEMYALAQRRPQYGFDKHKGYGTKQHLEALKQYGVLPEHRRDFAPVRNLLAQQALF.

The RNase H type-2 domain maps to 3-193; that stretch reads ILTAGVDEAG…VRNLLAQQAL (191 aa). A divalent metal cation is bound by residues Asp9, Glu10, and Asp101.

This sequence belongs to the RNase HII family. Requires Mn(2+) as cofactor. It depends on Mg(2+) as a cofactor.

It is found in the cytoplasm. It carries out the reaction Endonucleolytic cleavage to 5'-phosphomonoester.. Endonuclease that specifically degrades the RNA of RNA-DNA hybrids. The sequence is that of Ribonuclease HII from Neisseria gonorrhoeae (strain ATCC 700825 / FA 1090).